Here is a 347-residue protein sequence, read N- to C-terminus: Selenide, water dikinase (347 aa).

Cys-17 is an active-site residue. ATP contacts are provided by residues Lys-20 and 48-50 (TRD). Position 51 (Asp-51) interacts with Mg(2+). Residues Asp-68, Asp-91, and 139–141 (GHS) contribute to the ATP site. Asp-91 provides a ligand contact to Mg(2+). Mg(2+) is bound at residue Asp-227.

It belongs to the selenophosphate synthase 1 family. Class I subfamily. As to quaternary structure, homodimer. Mg(2+) serves as cofactor.

The enzyme catalyses hydrogenselenide + ATP + H2O = selenophosphate + AMP + phosphate + 2 H(+). Synthesizes selenophosphate from selenide and ATP. The chain is Selenide, water dikinase from Escherichia coli O139:H28 (strain E24377A / ETEC).